The chain runs to 660 residues: Peroxisomal acyl-coenzyme A oxidase 1 (660 aa).

Ser-26 is subject to Phosphoserine. Residues Lys-89 and Lys-90 each carry the N6-succinyllysine modification. The FAD site is built by Thr-139 and Gly-178. Lys-216 bears the N6-acetyllysine mark. Lys-241 bears the N6-succinyllysine mark. N6-acetyllysine is present on residues Lys-255, Lys-267, and Lys-272. At Lys-349 the chain carries N6-succinyllysine. Glu-421 serves as the catalytic Proton acceptor. N6-acetyllysine; alternate is present on residues Lys-437 and Lys-446. N6-succinyllysine; alternate occurs at positions 437 and 446. N6-acetyllysine is present on residues Lys-500 and Lys-504. Residue Lys-512 is modified to N6-acetyllysine; alternate. At Lys-512 the chain carries N6-succinyllysine; alternate. Position 542 is an N6-succinyllysine (Lys-542). Position 637 is an N6-acetyllysine; alternate (Lys-637). Position 637 is an N6-succinyllysine; alternate (Lys-637). Lys-643 carries the N6-succinyllysine modification. A Phosphoserine modification is found at Ser-649. Lys-651 is modified (N6-acetyllysine). An N6-succinyllysine modification is found at Lys-654. Positions 658–660 (SKL) match the Microbody targeting signal motif.

This sequence belongs to the acyl-CoA oxidase family. Homodimer. Interacts with LONP2. FAD is required as a cofactor. Widely expressed with highest levels of isoform 1 and isoform 2 detected in testis. Isoform 1 is expressed at higher levels than isoform 2 in liver and kidney while isoform 2 levels are higher in brain, lung, muscle, white adipose tissue and testis. Levels are almost equal in heart.

The protein localises to the peroxisome. It catalyses the reaction a 2,3-saturated acyl-CoA + O2 = a (2E)-enoyl-CoA + H2O2. The enzyme catalyses hexadecanoyl-CoA + O2 = (2E)-hexadecenoyl-CoA + H2O2. The catalysed reaction is dodecanoyl-CoA + O2 = (2E)-dodecenoyl-CoA + H2O2. It carries out the reaction octanoyl-CoA + O2 = (2E)-octenoyl-CoA + H2O2. It catalyses the reaction decanoyl-CoA + O2 = (2E)-decenoyl-CoA + H2O2. The enzyme catalyses tetradecanoyl-CoA + O2 = (2E)-tetradecenoyl-CoA + H2O2. The catalysed reaction is hexadecanedioyl-CoA + O2 = (2E)-hexadecenedioyl-CoA + H2O2. It carries out the reaction (5Z,8Z,11Z,14Z,17Z)-eicosapentaenoyl-CoA + O2 = (2E,5Z,8Z,11Z,14Z,17Z)-icosahexaenoyl-CoA + H2O2. It catalyses the reaction tetracosanoyl-CoA + O2 = (2E)-tetracosenoyl-CoA + H2O2. The enzyme catalyses glutaryl-CoA + O2 = (2E)-glutaconyl-CoA + H2O2. The catalysed reaction is hexanoyl-CoA + O2 = (2E)-hexenoyl-CoA + H2O2. It carries out the reaction octadecanoyl-CoA + O2 = (2E)-octadecenoyl-CoA + H2O2. It catalyses the reaction (6Z,9Z,12Z,15Z,18Z,21Z)-tetracosahexaenoyl-CoA + O2 = (2E,6Z,9Z,12Z,15Z,18Z,21Z)-tetracosaheptaenoyl-CoA + H2O2. Its pathway is lipid metabolism; peroxisomal fatty acid beta-oxidation. Involved in the initial and rate-limiting step of peroxisomal beta-oxidation of straight-chain saturated and unsaturated very-long-chain fatty acids. Catalyzes the desaturation of fatty acyl-CoAs such as palmitoyl-CoA (hexadecanoyl-CoA) to 2-trans-enoyl-CoAs ((2E)-enoyl-CoAs) such as (2E)-hexadecenoyl-CoA, and donates electrons directly to molecular oxygen (O(2)), thereby producing hydrogen peroxide (H(2)O(2)). In terms of biological role, shows highest activity against medium-chain fatty acyl-CoAs. Shows optimum activity with a chain length of 10 carbons (decanoyl-CoA) in vitro. Functionally, is active against a much broader range of substrates and shows activity towards long-chain fatty acyl-CoAs. In Homo sapiens (Human), this protein is Peroxisomal acyl-coenzyme A oxidase 1.